The primary structure comprises 233 residues: MRLTAQVINEAPEILNPEGKLTLLLRDLQITELENLAITQNKYQVIDLSNNDLISLGNIPKRFNNLQCLLLSNNNISYIDDESFPSDNHITSITLFNNNIYQFQKSFKDKFPKLETLILLGNPITEMENYRYFIIWLIPSLKVLDFKKVKQAERKTSEDMFGTNRDEFNSLAQQMFKNENTEIKLDGKSDRQVKNFVKKMTDEERQQLLKKLETATSIEEIERIENDLKEGAV.

LRR repeat units follow at residues 20 to 40 (KLTL…AITQ), 42 to 63 (KYQV…PKRF), 65 to 86 (NLQC…SFPS), and 89 to 110 (HITS…FKDK). The region spanning 122–160 (NPITEMENYRYFIIWLIPSLKVLDFKKVKQAERKTSEDM) is the LRRCT domain.

It belongs to the U2 small nuclear ribonucleoprotein A family. In terms of assembly, associated with the spliceosome.

Its subcellular location is the nucleus. In terms of biological role, involved in pre-mRNA splicing. In Candida albicans (strain SC5314 / ATCC MYA-2876) (Yeast), this protein is U2 small nuclear ribonucleoprotein A' (LEA1).